A 100-amino-acid polypeptide reads, in one-letter code: Small ribosomal subunit protein uS14c (100 aa).

Belongs to the universal ribosomal protein uS14 family. As to quaternary structure, part of the 30S ribosomal subunit.

It is found in the plastid. The protein localises to the chloroplast. Functionally, binds 16S rRNA, required for the assembly of 30S particles. This Euglena gracilis protein is Small ribosomal subunit protein uS14c.